Consider the following 257-residue polypeptide: 3-methyl-2-oxobutanoate hydroxymethyltransferase (257 aa).

Residues Asp44 and Asp83 each contribute to the Mg(2+) site. 3-methyl-2-oxobutanoate is bound by residues 44-45 (DS), Asp83, and Lys113. Glu115 is a binding site for Mg(2+). Catalysis depends on Glu182, which acts as the Proton acceptor.

Belongs to the PanB family. As to quaternary structure, homodecamer; pentamer of dimers. The cofactor is Mg(2+).

The protein resides in the cytoplasm. The catalysed reaction is 3-methyl-2-oxobutanoate + (6R)-5,10-methylene-5,6,7,8-tetrahydrofolate + H2O = 2-dehydropantoate + (6S)-5,6,7,8-tetrahydrofolate. It participates in cofactor biosynthesis; (R)-pantothenate biosynthesis; (R)-pantoate from 3-methyl-2-oxobutanoate: step 1/2. Functionally, catalyzes the reversible reaction in which hydroxymethyl group from 5,10-methylenetetrahydrofolate is transferred onto alpha-ketoisovalerate to form ketopantoate. The sequence is that of 3-methyl-2-oxobutanoate hydroxymethyltransferase from Rippkaea orientalis (strain PCC 8801 / RF-1) (Cyanothece sp. (strain PCC 8801)).